We begin with the raw amino-acid sequence, 440 residues long: Phosphoglycerate kinase, glycosomal (440 aa).

(2R)-3-phosphoglycerate contacts are provided by Val23, Asp24, Phe25, Asn26, Arg39, Ser61, His62, Gly64, Arg65, Arg135, His171, and Arg172. Position 217 (Gly217) interacts with CDP. Ala218 serves as a coordination point for ADP. 2 residues coordinate AMP: Ala218 and Lys219. Ala218 contributes to the ATP binding site. Ala218 lines the Mg(2+) pocket. Lys219 is a binding site for (2R)-3-phosphoglycerate. Asp222 is a CDP binding site. Mg(2+) is bound at residue Asp222. Lys223 and Gly241 together coordinate ADP. AMP is bound at residue Lys223. Residue Gly241 coordinates CDP. The AMP site is built by Ala242 and Ala314. ATP is bound by residues Ala242 and Ala314. Positions 314 and 338 each coordinate ADP. Residues Gly339 and Phe344 each coordinate CDP. Residues Phe344, Glu345, Asp377, and Ser378 each coordinate ADP. An AMP-binding site is contributed by Glu345. ATP-binding residues include Asp377 and Ser378. Asp377 contacts Mg(2+).

The protein belongs to the phosphoglycerate kinase family. In terms of assembly, monomer. Requires Mg(2+) as cofactor.

It localises to the glycosome. The enzyme catalyses (2R)-3-phosphoglycerate + ATP = (2R)-3-phospho-glyceroyl phosphate + ADP. Its pathway is carbohydrate degradation; glycolysis; pyruvate from D-glyceraldehyde 3-phosphate: step 2/5. The protein is Phosphoglycerate kinase, glycosomal of Trypanosoma brucei brucei.